A 362-amino-acid chain; its full sequence is Probable endopolygalacturonase B (362 aa).

Positions 1 to 20 are cleaved as a signal peptide; the sequence is MHFLQNAVVAATMGAALAAA. A propeptide spanning residues 21 to 25 is cleaved from the precursor; that stretch reads APLEK. Cysteines 28 and 43 form a disulfide. PbH1 repeat units lie at residues 155–184, 185–206, 207–227, 236–257, 265–287, and 299–344; these read ADHLTITDVTIDNSAGTSKGHNTDAFDIGQ, STYITIDGATVYNQDDCLAINS, GEHITFTNGYCDGGHGLSIGS, VNDVTISNSKVLNSQNGVRIKT, VENVKFEDITLSDISKYGIVVEQ, and TNGV…DVTG. The active-site Proton donor is Asp199. Cys201 and Cys217 are disulfide-bonded. Residue His221 is part of the active site. Cysteines 327 and 332 form a disulfide. Residue Asn334 is glycosylated (N-linked (GlcNAc...) asparagine). Cys351 and Cys360 are oxidised to a cystine.

Belongs to the glycosyl hydrolase 28 family.

The protein resides in the secreted. The enzyme catalyses (1,4-alpha-D-galacturonosyl)n+m + H2O = (1,4-alpha-D-galacturonosyl)n + (1,4-alpha-D-galacturonosyl)m.. Its function is as follows. Involved in maceration and soft-rotting of plant tissue. Hydrolyzes the 1,4-alpha glycosidic bonds of de-esterified pectate in the smooth region of the plant cell wall. The protein is Probable endopolygalacturonase B (pgaB) of Aspergillus niger (strain ATCC MYA-4892 / CBS 513.88 / FGSC A1513).